Reading from the N-terminus, the 229-residue chain is 3-dehydroquinate dehydratase (229 aa).

Residues 29 to 31 (ELR) and arginine 56 contribute to the 3-dehydroquinate site. Histidine 120 functions as the Proton donor/acceptor in the catalytic mechanism. Catalysis depends on lysine 146, which acts as the Schiff-base intermediate with substrate. Positions 187, 208, and 212 each coordinate 3-dehydroquinate.

This sequence belongs to the type-I 3-dehydroquinase family. Homodimer.

It catalyses the reaction 3-dehydroquinate = 3-dehydroshikimate + H2O. Its pathway is metabolic intermediate biosynthesis; chorismate biosynthesis; chorismate from D-erythrose 4-phosphate and phosphoenolpyruvate: step 3/7. Involved in the third step of the chorismate pathway, which leads to the biosynthesis of aromatic amino acids. Catalyzes the cis-dehydration of 3-dehydroquinate (DHQ) and introduces the first double bond of the aromatic ring to yield 3-dehydroshikimate. The protein is 3-dehydroquinate dehydratase of Haloarcula marismortui (strain ATCC 43049 / DSM 3752 / JCM 8966 / VKM B-1809) (Halobacterium marismortui).